A 422-amino-acid polypeptide reads, in one-letter code: Proline--tRNA ligase (422 aa).

It belongs to the class-II aminoacyl-tRNA synthetase family. ProS type 2 subfamily. Homodimer.

Its subcellular location is the cytoplasm. It carries out the reaction tRNA(Pro) + L-proline + ATP = L-prolyl-tRNA(Pro) + AMP + diphosphate. Catalyzes the attachment of proline to tRNA(Pro) in a two-step reaction: proline is first activated by ATP to form Pro-AMP and then transferred to the acceptor end of tRNA(Pro). This chain is Proline--tRNA ligase, found in Wolbachia sp. subsp. Drosophila simulans (strain wRi).